Consider the following 571-residue polypeptide: Proline--tRNA ligase 1 (571 aa).

Belongs to the class-II aminoacyl-tRNA synthetase family. ProS type 1 subfamily. In terms of assembly, homodimer.

The protein localises to the cytoplasm. It catalyses the reaction tRNA(Pro) + L-proline + ATP = L-prolyl-tRNA(Pro) + AMP + diphosphate. Catalyzes the attachment of proline to tRNA(Pro) in a two-step reaction: proline is first activated by ATP to form Pro-AMP and then transferred to the acceptor end of tRNA(Pro). As ProRS can inadvertently accommodate and process non-cognate amino acids such as alanine and cysteine, to avoid such errors it has two additional distinct editing activities against alanine. One activity is designated as 'pretransfer' editing and involves the tRNA(Pro)-independent hydrolysis of activated Ala-AMP. The other activity is designated 'posttransfer' editing and involves deacylation of mischarged Ala-tRNA(Pro). The misacylated Cys-tRNA(Pro) is not edited by ProRS. The protein is Proline--tRNA ligase 1 of Clostridioides difficile (strain 630) (Peptoclostridium difficile).